Reading from the N-terminus, the 152-residue chain is Ubiquitin-conjugating enzyme E2 N (152 aa).

A UBC core domain is found at 3–149 (GLPRRIIKET…ARAWTRLYAM (147 aa)). The residue at position 82 (K82) is an N6-acetyllysine. The active-site Glycyl thioester intermediate is the C87. K92 participates in a covalent cross-link: Glycyl lysine isopeptide (Lys-Gly) (interchain with G-Cter in ISG15).

It belongs to the ubiquitin-conjugating enzyme family. As to quaternary structure, heterodimer with UBE2V2. Interacts (UBE2V2-UBE2N heterodimer) with the E3 ligase STUB1 (via the U-box domain); the complex has a specific 'Lys-63'-linked polyubiquitination activity. Interacts with RNF8 and RNF168. Interacts with RNF11. Interacts with the E3 ligases, HLTF and SHPRH; the interactions promote the 'Lys-63'-linked polyubiquitination of PCNA upon genotoxic stress and lead to DNA repair. Interacts with ARIH2 (via RING-type 2). Interacts with OTUB1; leading to inhibit E2-conjugating activity. Interacts with RIGI and RNF135; involved in RIGI ubiquitination and activation. In terms of processing, conjugation to ISG15 impairs formation of the thioester bond with ubiquitin but not interaction with UBE2V2.

The catalysed reaction is S-ubiquitinyl-[E1 ubiquitin-activating enzyme]-L-cysteine + [E2 ubiquitin-conjugating enzyme]-L-cysteine = [E1 ubiquitin-activating enzyme]-L-cysteine + S-ubiquitinyl-[E2 ubiquitin-conjugating enzyme]-L-cysteine.. Its pathway is protein modification; protein ubiquitination. Activity is inhibited by binding to OTUB1, which prevents 'Lys-63'-linked polyubiquitination. In terms of biological role, the UBE2V1-UBE2N and UBE2V2-UBE2N heterodimers catalyze the synthesis of non-canonical 'Lys-63'-linked polyubiquitin chains. This type of polyubiquitination does not lead to protein degradation by the proteasome. Mediates transcriptional activation of target genes. Plays a role in the control of progress through the cell cycle and differentiation. Plays a role in the error-free DNA repair pathway and contributes to the survival of cells after DNA damage. Acts together with the E3 ligases, HLTF and SHPRH, in the 'Lys-63'-linked poly-ubiquitination of PCNA upon genotoxic stress, which is required for DNA repair. Appears to act together with E3 ligase RNF5 in the 'Lys-63'-linked polyubiquitination of JKAMP thereby regulating JKAMP function by decreasing its association with components of the proteasome and ERAD. Promotes TRIM5 capsid-specific restriction activity and the UBE2V1-UBE2N heterodimer acts in concert with TRIM5 to generate 'Lys-63'-linked polyubiquitin chains which activate the MAP3K7/TAK1 complex which in turn results in the induction and expression of NF-kappa-B and MAPK-responsive inflammatory genes. Together with RNF135 and UB2V1, catalyzes the viral RNA-dependent 'Lys-63'-linked polyubiquitination of RIGI to activate the downstream signaling pathway that leads to interferon beta production. UBE2V1-UBE2N together with TRAF3IP2 E3 ubiquitin ligase mediate 'Lys-63'-linked polyubiquitination of TRAF6, a component of IL17A-mediated signaling pathway. This Macaca fascicularis (Crab-eating macaque) protein is Ubiquitin-conjugating enzyme E2 N (UBE2N).